Reading from the N-terminus, the 752-residue chain is Endo-1,4-beta-xylanase 3 (752 aa).

The interval Met1–Glu22 is disordered. The segment covering Thr10 to Glu22 has biased composition (basic and acidic residues). CBM-cenC domains follow at residues Lys26 to Pro163 and Asn197 to Pro344. The GH10 domain maps to Phe397–Val692. Catalysis depends on Glu526, which acts as the Proton donor. The active-site Nucleophile is the Glu627.

This sequence belongs to the glycosyl hydrolase 10 (cellulase F) family. In terms of tissue distribution, confined to immature xylems.

It carries out the reaction Endohydrolysis of (1-&gt;4)-beta-D-xylosidic linkages in xylans.. It participates in glycan degradation; xylan degradation. Functionally, binds to and hydrolyzes insoluble and soluble xylan substrates. The protein is Endo-1,4-beta-xylanase 3 of Arabidopsis thaliana (Mouse-ear cress).